The sequence spans 480 residues: Flotillin-like protein 2 (480 aa).

A lipid anchor (S-palmitoyl cysteine) is attached at Cys37. A coiled-coil region spans residues 237–257; sequence ENQREAEVAQANSELAKKKAA.

It belongs to the band 7/mec-2 family. Flotillin subfamily. In terms of processing, may be palmitoylated. In terms of tissue distribution, expressed in flowers in green pods. Primarily expressed in vascular tissues. Upon induction of nodulation, expansion of expression in the root cortex in the region of elongating root hairs, which will eventually become colonized by bacteria. Expressed in the infection zone in nodules.

It is found in the cell membrane. The protein localises to the membrane. It localises to the caveola. May act as a scaffolding protein within caveolar membranes, functionally participating in formation of caveolae or caveolae-like vesicles. Required for early symbiotic events and nodules formation. This is Flotillin-like protein 2 (FLOT2) from Medicago truncatula (Barrel medic).